The chain runs to 356 residues: GTPase Obg (356 aa).

The Obg domain occupies 1–159 (MKFLDEAKVY…RWIWLRMKLI (159 aa)). The region spanning 160–327 (ADAGLVGLPN…ALRKLADVVG (168 aa)) is the OBG-type G domain. GTP is bound by residues 166-173 (GLPNAGKS), 191-195 (FTTLH), 212-215 (DIPG), 279-282 (NKID), and 308-310 (SGA). Mg(2+)-binding residues include Ser173 and Thr193. The tract at residues 327 to 356 (GEQPVSSKAKNAVESAATEEPWAAPVPPQG) is disordered.

It belongs to the TRAFAC class OBG-HflX-like GTPase superfamily. OBG GTPase family. In terms of assembly, monomer. It depends on Mg(2+) as a cofactor.

It is found in the cytoplasm. In terms of biological role, an essential GTPase which binds GTP, GDP and possibly (p)ppGpp with moderate affinity, with high nucleotide exchange rates and a fairly low GTP hydrolysis rate. Plays a role in control of the cell cycle, stress response, ribosome biogenesis and in those bacteria that undergo differentiation, in morphogenesis control. In Bradyrhizobium sp. (strain ORS 278), this protein is GTPase Obg.